Here is a 486-residue protein sequence, read N- to C-terminus: Cardiolipin synthase A (486 aa).

Helical transmembrane passes span 3 to 23 (TFYT…IAGV) and 38 to 58 (MAWL…YLSV). PLD phosphodiesterase domains are found at residues 219-246 (MDLR…VDPR) and 399-426 (EGGL…DMRS). Active-site residues include histidine 224, lysine 226, aspartate 231, histidine 404, lysine 406, and aspartate 411.

This sequence belongs to the phospholipase D family. Cardiolipin synthase subfamily. ClsA sub-subfamily.

The protein resides in the cell inner membrane. The enzyme catalyses 2 a 1,2-diacyl-sn-glycero-3-phospho-(1'-sn-glycerol) = a cardiolipin + glycerol. Its function is as follows. Catalyzes the reversible phosphatidyl group transfer from one phosphatidylglycerol molecule to another to form cardiolipin (CL) (diphosphatidylglycerol) and glycerol. This Salmonella arizonae (strain ATCC BAA-731 / CDC346-86 / RSK2980) protein is Cardiolipin synthase A.